The sequence spans 250 residues: Kallikrein-9 (250 aa).

The N-terminal stretch at 1–15 (MKLGLLCALLSLLAG) is a signal peptide. One can recognise a Peptidase S1 domain in the interval 23-249 (AIGAEECRPN…YLDWIQEIME (227 aa)). 6 disulfides stabilise this stretch: Cys-29/Cys-164, Cys-48/Cys-64, Cys-136/Cys-238, Cys-143/Cys-210, Cys-175/Cys-189, and Cys-200/Cys-225. Active-site charge relay system residues include His-63 and Asp-111. Asn-131 and Asn-166 each carry an N-linked (GlcNAc...) asparagine glycan. Residue Ser-204 is the Charge relay system of the active site. A glycan (N-linked (GlcNAc...) asparagine) is linked at Asn-211.

Belongs to the peptidase S1 family. Kallikrein subfamily. Skin, thymus, trachea, cerebellum and spinal cord.

Its subcellular location is the secreted. In Homo sapiens (Human), this protein is Kallikrein-9 (KLK9).